Consider the following 172-residue polypeptide: Zinc finger protein 580 (172 aa).

The disordered stretch occupies residues 1-92; it reads MLLLPPRPPH…PGEPGPRKGY (92 aa). Residues 19–30 show a composition bias toward pro residues; it reads MDPPPPKTPPFP. A Glycyl lysine isopeptide (Lys-Gly) (interchain with G-Cter in SUMO2) cross-link involves residue Lys31. The C2H2-type 1 zinc finger occupies 92 to 114; it reads YSCPECARVFASPLRLQSHRVSH. Lys118 is covalently cross-linked (Glycyl lysine isopeptide (Lys-Gly) (interchain with G-Cter in SUMO2)). 2 consecutive C2H2-type zinc fingers follow at residues 120-142 and 150-172; these read FTCG…RATH and HTCP…VRLH.

In terms of assembly, interacts with SMAD2.

Its subcellular location is the nucleus. Functionally, involved in the regulation of endothelial cell proliferation and migration. Mediates H(2)O(2)-induced leukocyte chemotaxis by elevating interleukin-8 production and may play a role in inflammation. May be involved in transcriptional regulation. The sequence is that of Zinc finger protein 580 (Znf580) from Mus musculus (Mouse).